The following is a 126-amino-acid chain: Small ribosomal subunit protein uS13 (126 aa).

Residues 92–126 are disordered; sequence HRRGLPVRGQRTKTNARTRKGPKKTVAGKKKATRK.

The protein belongs to the universal ribosomal protein uS13 family. As to quaternary structure, part of the 30S ribosomal subunit. Forms a loose heterodimer with protein S19. Forms two bridges to the 50S subunit in the 70S ribosome.

Functionally, located at the top of the head of the 30S subunit, it contacts several helices of the 16S rRNA. In the 70S ribosome it contacts the 23S rRNA (bridge B1a) and protein L5 of the 50S subunit (bridge B1b), connecting the 2 subunits; these bridges are implicated in subunit movement. Contacts the tRNAs in the A and P-sites. The polypeptide is Small ribosomal subunit protein uS13 (Deinococcus deserti (strain DSM 17065 / CIP 109153 / LMG 22923 / VCD115)).